Consider the following 235-residue polypeptide: Large ribosomal subunit protein uL1 (235 aa).

The protein belongs to the universal ribosomal protein uL1 family. As to quaternary structure, part of the 50S ribosomal subunit.

Functionally, binds directly to 23S rRNA. The L1 stalk is quite mobile in the ribosome, and is involved in E site tRNA release. In terms of biological role, protein L1 is also a translational repressor protein, it controls the translation of the L11 operon by binding to its mRNA. The polypeptide is Large ribosomal subunit protein uL1 (Methylobacterium sp. (strain 4-46)).